Reading from the N-terminus, the 158-residue chain is Endoribonuclease YbeY (158 aa).

Positions 117, 121, and 127 each coordinate Zn(2+).

Belongs to the endoribonuclease YbeY family. Zn(2+) is required as a cofactor.

Its subcellular location is the cytoplasm. Its function is as follows. Single strand-specific metallo-endoribonuclease involved in late-stage 70S ribosome quality control and in maturation of the 3' terminus of the 16S rRNA. The polypeptide is Endoribonuclease YbeY (Francisella philomiragia subsp. philomiragia (strain ATCC 25017 / CCUG 19701 / FSC 153 / O#319-036)).